The sequence spans 372 residues: tRNA-specific 2-thiouridylase MnmA (372 aa).

ATP-binding positions include 9 to 16 and M35; that span reads GLSGGVDS. The tract at residues 95–97 is interaction with target base in tRNA; sequence NPD. The active-site Nucleophile is the C100. A disulfide bridge connects residues C100 and C198. G124 is an ATP binding site. Residues 148-150 are interaction with tRNA; the sequence is KDQ. The active-site Cysteine persulfide intermediate is the C198. The segment at 317 to 318 is interaction with tRNA; it reads RY.

It belongs to the MnmA/TRMU family.

Its subcellular location is the cytoplasm. It carries out the reaction S-sulfanyl-L-cysteinyl-[protein] + uridine(34) in tRNA + AH2 + ATP = 2-thiouridine(34) in tRNA + L-cysteinyl-[protein] + A + AMP + diphosphate + H(+). In terms of biological role, catalyzes the 2-thiolation of uridine at the wobble position (U34) of tRNA, leading to the formation of s(2)U34. This chain is tRNA-specific 2-thiouridylase MnmA, found in Delftia acidovorans (strain DSM 14801 / SPH-1).